Here is an 82-residue protein sequence, read N- to C-terminus: ATP synthase subunit c (82 aa).

2 consecutive transmembrane segments (helical) span residues 7 to 27 and 53 to 73; these read LVAL…CIGI and FLLA…AMLF.

The protein belongs to the ATPase C chain family. F-type ATPases have 2 components, F(1) - the catalytic core - and F(0) - the membrane proton channel. F(1) has five subunits: alpha(3), beta(3), gamma(1), delta(1), epsilon(1). F(0) has three main subunits: a(1), b(2) and c(10-14). The alpha and beta chains form an alternating ring which encloses part of the gamma chain. F(1) is attached to F(0) by a central stalk formed by the gamma and epsilon chains, while a peripheral stalk is formed by the delta and b chains.

Its subcellular location is the cell inner membrane. Its function is as follows. F(1)F(0) ATP synthase produces ATP from ADP in the presence of a proton or sodium gradient. F-type ATPases consist of two structural domains, F(1) containing the extramembraneous catalytic core and F(0) containing the membrane proton channel, linked together by a central stalk and a peripheral stalk. During catalysis, ATP synthesis in the catalytic domain of F(1) is coupled via a rotary mechanism of the central stalk subunits to proton translocation. Functionally, key component of the F(0) channel; it plays a direct role in translocation across the membrane. A homomeric c-ring of between 10-14 subunits forms the central stalk rotor element with the F(1) delta and epsilon subunits. This is ATP synthase subunit c from Leptothrix cholodnii (strain ATCC 51168 / LMG 8142 / SP-6) (Leptothrix discophora (strain SP-6)).